Reading from the N-terminus, the 269-residue chain is Phosphoribosylformylglycinamidine synthase subunit PurQ (269 aa).

The region spanning 5 to 262 is the Glutamine amidotransferase type-1 domain; that stretch reads VLVMSGYGIN…IESNLQIFKN (258 aa). Cys95 serves as the catalytic Nucleophile. Active-site residues include His222, Glu224, and Glu232.

In terms of assembly, part of the FGAM synthase complex composed of 1 PurL, 1 PurQ and 2 PurS subunits.

The protein localises to the cytoplasm. The catalysed reaction is N(2)-formyl-N(1)-(5-phospho-beta-D-ribosyl)glycinamide + L-glutamine + ATP + H2O = 2-formamido-N(1)-(5-O-phospho-beta-D-ribosyl)acetamidine + L-glutamate + ADP + phosphate + H(+). The enzyme catalyses L-glutamine + H2O = L-glutamate + NH4(+). The protein operates within purine metabolism; IMP biosynthesis via de novo pathway; 5-amino-1-(5-phospho-D-ribosyl)imidazole from N(2)-formyl-N(1)-(5-phospho-D-ribosyl)glycinamide: step 1/2. In terms of biological role, part of the phosphoribosylformylglycinamidine synthase complex involved in the purines biosynthetic pathway. Catalyzes the ATP-dependent conversion of formylglycinamide ribonucleotide (FGAR) and glutamine to yield formylglycinamidine ribonucleotide (FGAM) and glutamate. The FGAM synthase complex is composed of three subunits. PurQ produces an ammonia molecule by converting glutamine to glutamate. PurL transfers the ammonia molecule to FGAR to form FGAM in an ATP-dependent manner. PurS interacts with PurQ and PurL and is thought to assist in the transfer of the ammonia molecule from PurQ to PurL. This Methanococcus maripaludis (strain C5 / ATCC BAA-1333) protein is Phosphoribosylformylglycinamidine synthase subunit PurQ.